Consider the following 386-residue polypeptide: tRNA N6-adenosine threonylcarbamoyltransferase (386 aa).

Residues H141, H145, and Y162 each coordinate a divalent metal cation. Residues 162–166 (YVSGG), D194, G209, E213, and N315 contribute to the substrate site. D344 is an a divalent metal cation binding site.

It belongs to the KAE1 / TsaD family. In terms of assembly, component of the EKC/KEOPS complex composed of at least BUD32, CGI121, GON7, KAE1 and PCC1; the whole complex dimerizes. A divalent metal cation serves as cofactor.

The protein resides in the cytoplasm. It localises to the nucleus. The enzyme catalyses L-threonylcarbamoyladenylate + adenosine(37) in tRNA = N(6)-L-threonylcarbamoyladenosine(37) in tRNA + AMP + H(+). Functionally, component of the EKC/KEOPS complex that is required for the formation of a threonylcarbamoyl group on adenosine at position 37 (t(6)A37) in tRNAs that read codons beginning with adenine. The complex is probably involved in the transfer of the threonylcarbamoyl moiety of threonylcarbamoyl-AMP (TC-AMP) to the N6 group of A37. KAE1 likely plays a direct catalytic role in this reaction, but requires other protein(s) of the complex to fulfill this activity. The EKC/KEOPS complex also promotes both telomere uncapping and telomere elongation. The complex is required for efficient recruitment of transcriptional coactivators. In Saccharomyces cerevisiae (strain ATCC 204508 / S288c) (Baker's yeast), this protein is tRNA N6-adenosine threonylcarbamoyltransferase.